An 858-amino-acid chain; its full sequence is Heat shock protein 105 kDa (858 aa).

At Ser2 the chain carries N-acetylserine. Lys471 bears the N6-acetyllysine mark. Disordered stretches follow at residues 500–584 (KVPT…PPEA) and 796–858 (CEPV…MDLD). Residues 504 to 514 (EENEMSSEADM) are compositionally biased toward acidic residues. Ser509 and Ser510 each carry phosphoserine. Over residues 532-554 (QQDNSEAGTQPQVQTDAQQTSQS) the composition is skewed to polar residues. A Phosphoserine modification is found at Ser557. Thr561 carries the phosphothreonine modification. 2 stretches are compositionally biased toward basic and acidic residues: residues 563–584 (EENK…PPEA) and 805–814 (PKIESPKLER). Ser809 carries the post-translational modification Phosphoserine. Thr815 carries the post-translational modification Phosphothreonine. The segment covering 821–832 (IDKKEEDLEDKN) has biased composition (basic and acidic residues). Residues 849–858 (EKNSVNMDLD) show a composition bias toward polar residues.

Belongs to the heat shock protein 70 family. Interacts with HSPA8/HSC70. Interacts with HSPA1A (via NBD) and HSPA1B (via NBD). Post-translationally, phosphorylation on Ser-509 may be important for regulation of the HSPA8/HSC70 chaperone activity.

It is found in the cytoplasm. Its function is as follows. Acts as a nucleotide-exchange factor (NEF) for chaperone proteins HSPA1A and HSPA1B, promoting the release of ADP from HSPA1A/B thereby triggering substrate release. Prevents the aggregation of denatured proteins in cells under severe stress, on which the ATP levels decrease markedly. Inhibits HSPA8/HSC70 ATPase and chaperone activities. This Pongo abelii (Sumatran orangutan) protein is Heat shock protein 105 kDa (HSPH1).